Here is a 298-residue protein sequence, read N- to C-terminus: Protein transport protein SEC13-1 (298 aa).

WD repeat units lie at residues 7–46, 51–92, 97–138, 143–196, 203–245, and 253–292; these read AHNDLIHDAVLDYYGKKLATCSSDKTIKIFEVEGESHKLV, GHEG…WSQI, VHTA…TATP, AHAI…QSYL, GHSD…GPWV, and EFPDVLWRASWSLSGNILAISGGDNKVTLWKENLNGKWES.

Belongs to the WD repeat SEC13 family. In terms of assembly, the COPII coat is composed of at least 5 proteins: the SEC23/24 complex, the SEC13/31 complex, and the protein SAR1. Component of the nuclear pore complex (NPC). NPC constitutes the exclusive means of nucleocytoplasmic transport. NPCs allow the passive diffusion of ions and small molecules and the active, nuclear transport receptor-mediated bidirectional transport of macromolecules such as proteins, RNAs, ribonucleoparticles (RNPs), and ribosomal subunits across the nuclear envelope. Due to its 8-fold rotational symmetry, all subunits are present with 8 copies or multiples thereof.

The protein resides in the cytoplasmic vesicle. It localises to the COPII-coated vesicle membrane. It is found in the endoplasmic reticulum membrane. Its subcellular location is the nucleus. The protein localises to the nuclear pore complex. In terms of biological role, component of the coat protein complex II (COPII) which promotes the formation of transport vesicles from the endoplasmic reticulum (ER). The coat has two main functions, the physical deformation of the endoplasmic reticulum membrane into vesicles and the selection of cargo molecules. It also functions as a component of the nuclear pore complex (NPC). NPC components, collectively referred to as nucleoporins (NUPs), can play the role of both NPC structural components and of docking or interaction partners for transiently associated nuclear transport factors. SEC13 is required for efficient mRNA export from the nucleus to the cytoplasm and for correct nuclear pore biogenesis and distribution. The protein is Protein transport protein SEC13-1 (SEC131) of Candida glabrata (strain ATCC 2001 / BCRC 20586 / JCM 3761 / NBRC 0622 / NRRL Y-65 / CBS 138) (Yeast).